Consider the following 271-residue polypeptide: Tetraspanin-11 (271 aa).

The Cytoplasmic segment spans residues 1–7 (MFRVSNF). Residues 8–28 (MVGLANTLVMLVGASAIGYSI) traverse the membrane as a helical segment. Residues 29-44 (YMFVHQGVTDCESAIR) lie on the Extracellular side of the membrane. A helical transmembrane segment spans residues 45–65 (IPLLTTGLILFLVSLLGVIGS). The Cytoplasmic segment spans residues 66-76 (CFKENLAMVSY). A helical membrane pass occupies residues 77–97 (LIILFGGIVALMIFSIFLFFV). The Extracellular segment spans residues 98-236 (TNKGAGRVVS…LANIREKWRN (139 aa)). N-linked (GlcNAc...) asparagine glycans are attached at residues asparagine 185 and asparagine 195. The helical transmembrane segment at 237–257 (LLVFNICLLILLITVYSCGCC) threads the bilayer. Residues 258–271 (ARRNNRTARKSDSV) lie on the Cytoplasmic side of the membrane.

The protein belongs to the tetraspanin (TM4SF) family.

The protein localises to the membrane. May be involved in the regulation of cell differentiation. The chain is Tetraspanin-11 (TET11) from Arabidopsis thaliana (Mouse-ear cress).